We begin with the raw amino-acid sequence, 395 residues long: 8-amino-7-oxononanoate synthase (395 aa).

Position 24 (Arg-24) interacts with substrate. Pyridoxal 5'-phosphate is bound at residue Gly-111–Phe-112. A substrate-binding site is contributed by His-136. Pyridoxal 5'-phosphate is bound by residues Ser-184, Asp-209 to His-212, and Thr-240 to Lys-243. Lys-243 is subject to N6-(pyridoxal phosphate)lysine. A substrate-binding site is contributed by Thr-357.

This sequence belongs to the class-II pyridoxal-phosphate-dependent aminotransferase family. BioF subfamily. Homodimer. Pyridoxal 5'-phosphate serves as cofactor.

The enzyme catalyses 6-carboxyhexanoyl-[ACP] + L-alanine + H(+) = (8S)-8-amino-7-oxononanoate + holo-[ACP] + CO2. It participates in cofactor biosynthesis; biotin biosynthesis. In terms of biological role, catalyzes the decarboxylative condensation of pimeloyl-[acyl-carrier protein] and L-alanine to produce 8-amino-7-oxononanoate (AON), [acyl-carrier protein], and carbon dioxide. The sequence is that of 8-amino-7-oxononanoate synthase from Alkaliphilus oremlandii (strain OhILAs) (Clostridium oremlandii (strain OhILAs)).